Reading from the N-terminus, the 346-residue chain is Tyrosine--tRNA ligase (346 aa).

The 'HIGH' region signature appears at 47–56 (PSGRIHIAQA). The 'KMSKS' region signature appears at 230–234 (KMSKS). Lys-233 serves as a coordination point for ATP.

It belongs to the class-I aminoacyl-tRNA synthetase family. Homodimer.

The catalysed reaction is tRNA(Tyr) + L-tyrosine + ATP = L-tyrosyl-tRNA(Tyr) + AMP + diphosphate + H(+). In terms of biological role, catalyzes the attachment of tyrosine to tRNA(Tyr) in a two-step reaction: tyrosine is first activated by ATP to form Tyr-AMP and then transferred to the acceptor end of tRNA(Tyr). In Acanthamoeba polyphaga (Amoeba), this protein is Tyrosine--tRNA ligase (YARS).